A 413-amino-acid chain; its full sequence is MSTETTKPSITTTPTTVLVSPNTLKRKKGEDTSEEQLEAEIKRVALKDADSHSDNDHDSPDNVPSDVHLRMLCLVKHASLIVGHKGATISRIKSETSARINISNNIRGVPERIVYVRGTCDDVAKAYGMIVRALLEEHGNEDNGEDIEISINLLIPHHLMGCIIGKRGSRLREIEDLSAAKLFASPNQLLLSNDRILTINGVPDAIHIATFYISQTLLNFQMESPQKNVKRSIYYQPTQFNSVLIDHSQPNTIFHQRNHQYHPSDKLLSYKPNKNLPISSTLLSMATPQYTTASVANATAFQPNFVIPNVTVLDGPVISPAPGNHLLMNFVQQEIFIDEKFVGNVIGKDGKHINSVKESTGCSIIIQDPVEGSSERRLTIRGTFMASQAAIMLISNKIEIDRSNAERKRRSPL.

A compositionally biased stretch (low complexity) spans 1 to 23; sequence MSTETTKPSITTTPTTVLVSPNT. Positions 1–36 are disordered; it reads MSTETTKPSITTTPTTVLVSPNTLKRKKGEDTSEEQ. KH domains lie at 66–130, 148–213, and 330–394; these read DVHL…YGMI, EISI…TFYI, and FVQQ…IMLI.

As to quaternary structure, interacts with PAB1.

It is found in the nucleus. In Saccharomyces cerevisiae (strain ATCC 204508 / S288c) (Baker's yeast), this protein is PAB1-binding protein 2 (PBP2).